Reading from the N-terminus, the 366-residue chain is 2-aminoethylphosphonate--pyruvate transaminase (366 aa).

At Lys-192 the chain carries N6-(pyridoxal phosphate)lysine.

The protein belongs to the class-V pyridoxal-phosphate-dependent aminotransferase family. PhnW subfamily. In terms of assembly, homodimer. Pyridoxal 5'-phosphate serves as cofactor.

It carries out the reaction (2-aminoethyl)phosphonate + pyruvate = phosphonoacetaldehyde + L-alanine. In terms of biological role, involved in phosphonate degradation. The sequence is that of 2-aminoethylphosphonate--pyruvate transaminase (phnW) from Lysinibacillus sphaericus (strain C3-41).